The chain runs to 594 residues: Glutamate decarboxylase 1 (594 aa).

Residues 1-13 (MASSTPSSSATSS) are compositionally biased toward low complexity. The tract at residues 1–22 (MASSTPSSSATSSNAGADPNTA) is disordered. Ser78 carries the post-translational modification Phosphoserine. 4-aminobutanoate is bound at residue 190 to 192 (QLS). At Lys405 the chain carries N6-(pyridoxal phosphate)lysine. Residue Arg567 coordinates 4-aminobutanoate.

The protein belongs to the group II decarboxylase family. Homodimer. The cofactor is pyridoxal 5'-phosphate.

It carries out the reaction L-glutamate + H(+) = 4-aminobutanoate + CO2. Functionally, catalyzes the synthesis of the inhibitory neurotransmitter gamma-aminobutyric acid (GABA) with pyridoxal 5'-phosphate as cofactor. In Canis lupus familiaris (Dog), this protein is Glutamate decarboxylase 1 (GAD1).